The following is a 411-amino-acid chain: CinA-like protein (411 aa).

This sequence belongs to the CinA family.

The polypeptide is CinA-like protein (Dictyoglomus turgidum (strain DSM 6724 / Z-1310)).